Reading from the N-terminus, the 175-residue chain is 6,7-dimethyl-8-ribityllumazine synthase (175 aa).

5-amino-6-(D-ribitylamino)uracil-binding positions include phenylalanine 24, 58 to 60, and 82 to 84; these read ALE and AVI. Residue 87–88 coordinates (2S)-2-hydroxy-3-oxobutyl phosphate; it reads ET. Histidine 90 (proton donor) is an active-site residue. Asparagine 115 contributes to the 5-amino-6-(D-ribitylamino)uracil binding site. Arginine 129 contributes to the (2S)-2-hydroxy-3-oxobutyl phosphate binding site. Residues 150-175 are disordered; that stretch reads ALEPEEDDEDEDDEDEDFDDEEDDGR. Residues 152–175 show a composition bias toward acidic residues; it reads EPEEDDEDEDDEDEDFDDEEDDGR.

The protein belongs to the DMRL synthase family.

It carries out the reaction (2S)-2-hydroxy-3-oxobutyl phosphate + 5-amino-6-(D-ribitylamino)uracil = 6,7-dimethyl-8-(1-D-ribityl)lumazine + phosphate + 2 H2O + H(+). Its pathway is cofactor biosynthesis; riboflavin biosynthesis; riboflavin from 2-hydroxy-3-oxobutyl phosphate and 5-amino-6-(D-ribitylamino)uracil: step 1/2. In terms of biological role, catalyzes the formation of 6,7-dimethyl-8-ribityllumazine by condensation of 5-amino-6-(D-ribitylamino)uracil with 3,4-dihydroxy-2-butanone 4-phosphate. This is the penultimate step in the biosynthesis of riboflavin. This is 6,7-dimethyl-8-ribityllumazine synthase from Bordetella bronchiseptica (strain ATCC BAA-588 / NCTC 13252 / RB50) (Alcaligenes bronchisepticus).